Consider the following 413-residue polypeptide: Alpha-1-antiproteinase (413 aa).

An N-terminal signal peptide occupies residues 1–24 (MTPSISWRLLLLAGLCCLVPSYLA). Serine 33 is modified (phosphoserine). 3 N-linked (GlcNAc...) asparagine glycosylation sites follow: asparagine 64, asparagine 101, and asparagine 265. An RCL region spans residues 368–387 (ATTIVEAVFMSLPPILHFNH). Residue serine 378 is modified to Phosphoserine.

The protein belongs to the serpin family. Interacts with CELA2A. Interacts with ERGIC3 and LMAN1/ERGIC53. Interacts with PRSS1/Trypsin.

It localises to the secreted. In terms of biological role, inhibitor of serine proteases. The primary target is elastase, but also has a moderate affinity for plasmin and thrombin. In Mus saxicola (Brown spiny mouse), this protein is Alpha-1-antiproteinase (Serpina1).